Consider the following 67-residue polypeptide: Large ribosomal subunit protein uL30 (67 aa).

The protein belongs to the universal ribosomal protein uL30 family. Part of the 50S ribosomal subunit.

The chain is Large ribosomal subunit protein uL30 from Thermotoga maritima (strain ATCC 43589 / DSM 3109 / JCM 10099 / NBRC 100826 / MSB8).